We begin with the raw amino-acid sequence, 314 residues long: NAD-dependent protein lipoamidase sirtuin-4, mitochondrial (314 aa).

The N-terminal 28 residues, 1-28 (MKMSFALTFRSAKGRWIANPSQPCSKAS), are a transit peptide targeting the mitochondrion. In terms of domain architecture, Deacetylase sirtuin-type spans 37 to 314 (PPLDPEKVKE…GELLPLIDPC (278 aa)). Residues 62–82 (GAGI…VGLY) and 143–146 (QNVD) contribute to the NAD(+) site. The active-site Proton acceptor is the His161. Residues Cys169, Cys172, Cys220, and Cys223 each coordinate Zn(2+). NAD(+) is bound by residues 260–262 (GSS), 286–288 (NIG), and Cys304.

This sequence belongs to the sirtuin family. Class II subfamily. Interacts with GLUD1, IDE and SLC25A5. Interacts with DLAT and PDHX. Interacts with MCCC1 (via the biotin carboxylation domain). Interacts with PCCA and PC. Zn(2+) is required as a cofactor. In terms of tissue distribution, detected in vascular smooth muscle and striated muscle. Detected in insulin-producing beta-cells in pancreas islets of Langerhans (at protein level). Widely expressed. Weakly expressed in leukocytes and fetal thymus.

Its subcellular location is the mitochondrion matrix. It catalyses the reaction N(6)-[(R)-lipoyl]-L-lysyl-[protein] + NAD(+) + H2O = 2''-O-lipoyl-ADP-D-ribose + nicotinamide + L-lysyl-[protein]. The enzyme catalyses N(6)-biotinyl-L-lysyl-[protein] + NAD(+) + H2O = 2''-O-biotinyl-ADP-D-ribose + nicotinamide + L-lysyl-[protein]. It carries out the reaction N(6)-acetyl-L-lysyl-[protein] + NAD(+) + H2O = 2''-O-acetyl-ADP-D-ribose + nicotinamide + L-lysyl-[protein]. The catalysed reaction is L-cysteinyl-[protein] + NAD(+) = S-(ADP-D-ribosyl)-L-cysteinyl-[protein] + nicotinamide + H(+). Its function is as follows. Acts as a NAD-dependent protein lipoamidase, biotinylase, deacetylase and ADP-ribosyl transferase. Catalyzes more efficiently removal of lipoyl- and biotinyl- than acetyl-lysine modifications. Inhibits the pyruvate dehydrogenase complex (PDH) activity via the enzymatic hydrolysis of the lipoamide cofactor from the E2 component, DLAT, in a phosphorylation-independent manner. Catalyzes the transfer of ADP-ribosyl groups onto target proteins, including mitochondrial GLUD1, inhibiting GLUD1 enzyme activity. Acts as a negative regulator of mitochondrial glutamine metabolism by mediating mono ADP-ribosylation of GLUD1: expressed in response to DNA damage and negatively regulates anaplerosis by inhibiting GLUD1, leading to block metabolism of glutamine into tricarboxylic acid cycle and promoting cell cycle arrest. In response to mTORC1 signal, SIRT4 expression is repressed, promoting anaplerosis and cell proliferation. Acts as a tumor suppressor. Also acts as a NAD-dependent protein deacetylase: mediates deacetylation of 'Lys-471' of MLYCD, inhibiting its activity, thereby acting as a regulator of lipid homeostasis. Does not seem to deacetylate PC. Controls fatty acid oxidation by inhibiting PPARA transcriptional activation. Impairs SIRT1-PPARA interaction probably through the regulation of NAD(+) levels. Down-regulates insulin secretion. The protein is NAD-dependent protein lipoamidase sirtuin-4, mitochondrial of Homo sapiens (Human).